Reading from the N-terminus, the 333-residue chain is MMLILSILSIIAFAAASPVPSIDENIRVLEHRAVTVTTQDLSNFRFYLQHADAAYCNFNTAVGKPVHCGAGNCPDVEKDSAIVVGSVVGTKTGIGAYVATDNARKEIVVSVRGSINVRNWITNFNFGQKTCDLVAGCGVHTGFLEAWEEVAANIKAAVSAAKTANPTFKFVVTGHSLGGAVATVAAAYLRKDGFPFDLYTYGSPRVGNDFFANFVTQQTGAEYRVTHGDDPVPRLPPIVFGYRHTSPEYWLDGGPLDKDYTVSEIKVCDGIANVMCNGGTIGLDILAHITYFQSMATCAPIAIPWKRDMSDEELDKKLTQYSEMDQEFVKQMT.

Residues 1 to 16 (MMLILSILSIIAFAAA) form the signal peptide. Intrachain disulfides connect Cys-56–Cys-268 and Cys-276–Cys-298. Ser-176 serves as the catalytic Nucleophile. Residues Asp-230 and His-288 contribute to the active site.

The protein belongs to the AB hydrolase superfamily. Lipase family. Class 3 subfamily.

The protein resides in the secreted. The catalysed reaction is a monoacylglycerol + H2O = glycerol + a fatty acid + H(+). It catalyses the reaction a diacylglycerol + H2O = a monoacylglycerol + a fatty acid + H(+). In terms of biological role, secreted mono- and diacylglycerol lipase that allows the use of hydrolyzed lipids as carbon source and might play a role in pathogenicity. Shows lipolytic activity towards olive oil and p-nitrophenylpalmitate. This is Secreted mono- and diacylglycerol lipase 1 from Fusarium solani (Filamentous fungus).